The sequence spans 762 residues: Protein PHTF1 (762 aa).

In terms of domain architecture, PHTF spans 6–150 (RDAISWYQKK…VHCQIVSTQI (145 aa)). 3 helical membrane-spanning segments follow: residues 77 to 97 (GLVRVVFFPLFSNWWIQVTSL), 99 to 119 (IFVWLLLLYFMQVIAIVLYLM), and 121 to 141 (PIVNISEVLGPLCLMLLMGTV). The interval 152–184 (RPSGNNGNRRRRKLRKTVNGDGSRENGNNSSDK) is disordered. N-linked (GlcNAc...) asparagine glycosylation is found at Asn179 and Asn180. Phosphoserine occurs at positions 272, 276, 277, 334, and 336. 2 disordered regions span residues 344–380 (SAAFSQGSRSGVSGGSRSLNMSRRDSESTRHDSETED) and 393–415 (RSSVTSDSEGAHVNTLHSGTKRD). Residues 348 to 361 (SQGSRSGVSGGSRS) show a composition bias toward low complexity. N-linked (GlcNAc...) asparagine glycosylation occurs at Asn363. The span at 365 to 376 (SRRDSESTRHDS) shows a compositional bias: basic and acidic residues. N-linked (GlcNAc...) asparagine glycosylation is present at Asn431. 4 helical membrane-spanning segments follow: residues 473–493 (GVGYQMLGNVVTIGLAFFPFL), 512–532 (EILTLFCGAPPVTPIIVLSII), 611–631 (VVVSSVFLLTLSIAFICCAQV), and 645–665 (WEFLIWETALLLFLLRLASLG). 2 N-linked (GlcNAc...) asparagine glycosylation sites follow: Asn674 and Asn733. The chain crosses the membrane as a helical span at residues 737–757 (VVILSAVSGVISDLLGFNIRL).

As to quaternary structure, interacts with FEM1B. Widely expressed with highest levels in testis.

Its subcellular location is the endoplasmic reticulum membrane. The protein localises to the golgi apparatus. It localises to the cis-Golgi network membrane. This chain is Protein PHTF1, found in Homo sapiens (Human).